The primary structure comprises 259 residues: MNTRATHKTEGFVLKTLSYSDSDLIVTFYTRNFGKLTAIARGARKSRKRFVNVLEPFCCSSLLFSRKQRDQLAWLESCQVINEFPEIRKSLDRTLLASYLIDLVDHFSIEEKPGRELFELLRSFLLLIEEGDTSERLLRFFEIRHLKLTGYAPALDCCMICKAPLNPQQRYVFNIAQGGLHCRSCYTTPAAPDVLPISVGTIKTLLLGREIETEKMKRILFSGQTARESKSLLSLFIGHILGKELKSLKVLDEIQRMGL.

Belongs to the RecO family.

Involved in DNA repair and RecF pathway recombination. The protein is DNA repair protein RecO of Syntrophus aciditrophicus (strain SB).